Reading from the N-terminus, the 521-residue chain is Cytochrome P450 monooxygenase sdnF (521 aa).

The helical transmembrane segment at 19–39 threads the bilayer; sequence YLGLLLSGTVLYTVYKLIIAI. 5 N-linked (GlcNAc...) asparagine glycosylation sites follow: Asn178, Asn186, Asn191, Asn309, and Asn416. Cys460 lines the heme pocket.

The protein belongs to the cytochrome P450 family. Requires heme as cofactor.

Its subcellular location is the membrane. It functions in the pathway antibiotic biosynthesis. In terms of biological role, cytochrome P450 monooxygenase; part of the gene cluster that mediates the biosynthesis of sordarin and hypoxysordarin, glycoside antibiotics with a unique tetracyclic diterpene aglycone structure. First, the geranylgeranyl diphosphate synthase sdnC constructs GGDP from farnesyl diphosphate and isopentenyl diphosphate. The diterpene cyclase sdnA then catalyzes the cyclization of GGDP to afford cycloaraneosene. Cycloaraneosene is then hydroxylated four times by the putative cytochrome P450 monooxygenases sdnB, sdnE, sdnF and sdnH to give a hydroxylated cycloaraneosene derivative such as cycloaraneosene-8,9,13,19-tetraol. Although the order of the hydroxylations is unclear, at least C8, C9 and C13 of the cycloaraneosene skeleton are hydroxylated before the sordaricin formation. Dehydration of the 13-hydroxy group of the hydroxylated cycloaraneosene derivative might be catalyzed by an unassigned hypothetical protein such as sdnG and sdnP to construct the cyclopentadiene moiety. The FAD-dependent oxidoreductase sdnN is proposed to catalyze the oxidation at C9 of the hydroxylated cycloaraneosene derivative and also catalyze the Baeyer-Villiger oxidation to give the lactone intermediate. The presumed lactone intermediate would be hydrolyzed to give an acrolein moiety and a carboxylate moiety. Then, [4+2]cycloaddition would occur between the acrolein moiety and the cyclopentadiene moiety to give sordaricin. SdnN might also be involved in the [4+2]cycloaddition after the hypothesized oxidation to accommodate the oxidized product and prompt the [4+2]cycloaddition. GDP-6-deoxy-D-altrose may be biosynthesized from GDP-D-mannose by the putative GDP-mannose-4,6-dehydratase sdnI and the short-chain dehydrogenase sdnK. The glycosyltransferase sdnJ catalyzes the attachment of 6-deoxy-D-altrose onto the 19-hydroxy group of sordaricin to give 4'-O-demethylsordarin. The methyltransferase sdnD would complete the biosynthesis of sordarin. Sordarin can be further modified into hypoxysordarin. The unique acyl chain at the 3'-hydroxy group of hypoxysordarin would be constructed by an iterative type I PKS sdnO and the trans-acting polyketide methyltransferase sdnL. SdnL would be responsible for the introduction of an alpha-methyl group of the polyketide chain. Alternatively, the beta-lactamase-like protein sdnR might be responsible for the cleavage and transfer of the polyketide chain from the PKS sdnO to sordarin. Two putative cytochrome P450 monooxygenases, sdnQ and sdnT, might catalyze the epoxidations of the polyketide chain to complete the biosynthesis of hypoxysordarin. Transcriptional regulators sdnM and sdnS are presumably encoded for the transcriptional regulation of the expression of the sdn gene cluster. In Sordaria araneosa (Pleurage araneosa), this protein is Cytochrome P450 monooxygenase sdnF.